The sequence spans 98 residues: Tan_12Cys (98 aa).

The first 21 residues, 1–21 (MNLKVLFLLAMVLVTLCLGED), serve as a signal peptide directing secretion. Residues 22 to 28 (RVTDRRK) constitute a propeptide that is removed on maturation.

Belongs to the teretoxin C (TC) superfamily. Post-translationally, contains 6 disulfide bonds. In terms of tissue distribution, expressed by the venom duct.

It is found in the secreted. This chain is Tan_12Cys, found in Terebra anilis (Auger snail).